The chain runs to 379 residues: UDP-4-amino-4-deoxy-L-arabinose--oxoglutarate aminotransferase (379 aa).

Lys-182 bears the N6-(pyridoxal phosphate)lysine mark.

This sequence belongs to the DegT/DnrJ/EryC1 family. ArnB subfamily. As to quaternary structure, homodimer. The cofactor is pyridoxal 5'-phosphate.

The enzyme catalyses UDP-4-amino-4-deoxy-beta-L-arabinose + 2-oxoglutarate = UDP-beta-L-threo-pentopyranos-4-ulose + L-glutamate. The protein operates within nucleotide-sugar biosynthesis; UDP-4-deoxy-4-formamido-beta-L-arabinose biosynthesis; UDP-4-deoxy-4-formamido-beta-L-arabinose from UDP-alpha-D-glucuronate: step 2/3. Its pathway is bacterial outer membrane biogenesis; lipopolysaccharide biosynthesis. Catalyzes the conversion of UDP-4-keto-arabinose (UDP-Ara4O) to UDP-4-amino-4-deoxy-L-arabinose (UDP-L-Ara4N). The modified arabinose is attached to lipid A and is required for resistance to polymyxin and cationic antimicrobial peptides. This chain is UDP-4-amino-4-deoxy-L-arabinose--oxoglutarate aminotransferase, found in Escherichia coli (strain K12 / DH10B).